The sequence spans 441 residues: Amino-acid acetyltransferase (441 aa).

An N-acetyltransferase domain is found at 295 to 434 (EQVRRATIND…QALYNYQRRS (140 aa)).

It belongs to the acetyltransferase family. ArgA subfamily. In terms of assembly, homohexamer.

The protein resides in the cytoplasm. The catalysed reaction is L-glutamate + acetyl-CoA = N-acetyl-L-glutamate + CoA + H(+). It participates in amino-acid biosynthesis; L-arginine biosynthesis; N(2)-acetyl-L-ornithine from L-glutamate: step 1/4. In Pectobacterium carotovorum subsp. carotovorum (strain PC1), this protein is Amino-acid acetyltransferase.